Consider the following 504-residue polypeptide: Probable protein phosphatase 2C 18 (504 aa).

The segment at 1–49 (MGLCYSVDRTTGKEPGEASSTATTAETVEERSGSGRWRRPRDLKGGGDI) is disordered. Residues 17 to 26 (EASSTATTAE) show a composition bias toward low complexity. One can recognise a PPM-type phosphatase domain in the interval 67 to 399 (IACLYTQQGK…DDCTVVCLFL (333 aa)). Mn(2+) contacts are provided by aspartate 103, glycine 104, aspartate 344, and aspartate 390. A disordered region spans residues 410–435 (TNVKKDSPKEESIESVTNSTSKEEDE). Residues 412–421 (VKKDSPKEES) show a composition bias toward basic and acidic residues.

The protein belongs to the PP2C family. Requires Mg(2+) as cofactor. Mn(2+) serves as cofactor.

It catalyses the reaction O-phospho-L-seryl-[protein] + H2O = L-seryl-[protein] + phosphate. The enzyme catalyses O-phospho-L-threonyl-[protein] + H2O = L-threonyl-[protein] + phosphate. The protein is Probable protein phosphatase 2C 18 of Arabidopsis thaliana (Mouse-ear cress).